Reading from the N-terminus, the 451-residue chain is Probable glycine dehydrogenase (decarboxylating) subunit 1 (451 aa).

The protein belongs to the GcvP family. N-terminal subunit subfamily. As to quaternary structure, the glycine cleavage system is composed of four proteins: P, T, L and H. In this organism, the P 'protein' is a heterodimer of two subunits.

The catalysed reaction is N(6)-[(R)-lipoyl]-L-lysyl-[glycine-cleavage complex H protein] + glycine + H(+) = N(6)-[(R)-S(8)-aminomethyldihydrolipoyl]-L-lysyl-[glycine-cleavage complex H protein] + CO2. Functionally, the glycine cleavage system catalyzes the degradation of glycine. The P protein binds the alpha-amino group of glycine through its pyridoxal phosphate cofactor; CO(2) is released and the remaining methylamine moiety is then transferred to the lipoamide cofactor of the H protein. The sequence is that of Probable glycine dehydrogenase (decarboxylating) subunit 1 from Staphylococcus aureus (strain MSSA476).